Here is a 456-residue protein sequence, read N- to C-terminus: Enolase (456 aa).

Gln169 contributes to the (2R)-2-phosphoglycerate binding site. Glu211 (proton donor) is an active-site residue. Mg(2+)-binding residues include Asp252, Glu314, and Asp341. (2R)-2-phosphoglycerate is bound by residues Lys366, Arg395, Ser396, and Lys417. Residue Lys366 is the Proton acceptor of the active site.

The protein belongs to the enolase family. Requires Mg(2+) as cofactor.

The protein resides in the cytoplasm. It is found in the secreted. Its subcellular location is the cell surface. The catalysed reaction is (2R)-2-phosphoglycerate = phosphoenolpyruvate + H2O. It functions in the pathway carbohydrate degradation; glycolysis; pyruvate from D-glyceraldehyde 3-phosphate: step 4/5. Catalyzes the reversible conversion of 2-phosphoglycerate (2-PG) into phosphoenolpyruvate (PEP). It is essential for the degradation of carbohydrates via glycolysis. The polypeptide is Enolase (Metamycoplasma arthritidis (strain 158L3-1) (Mycoplasma arthritidis)).